A 220-amino-acid polypeptide reads, in one-letter code: Ribose-5-phosphate isomerase A (220 aa).

Substrate is bound by residues 25–28 (TGST), 80–83 (DGAD), and 93–96 (KGGG). The active-site Proton acceptor is Glu102. Lys120 is a substrate binding site.

This sequence belongs to the ribose 5-phosphate isomerase family. Homodimer.

It carries out the reaction aldehydo-D-ribose 5-phosphate = D-ribulose 5-phosphate. It functions in the pathway carbohydrate degradation; pentose phosphate pathway; D-ribose 5-phosphate from D-ribulose 5-phosphate (non-oxidative stage): step 1/1. In terms of biological role, catalyzes the reversible conversion of ribose-5-phosphate to ribulose 5-phosphate. The polypeptide is Ribose-5-phosphate isomerase A (Bacillus cereus (strain ZK / E33L)).